A 212-amino-acid chain; its full sequence is LexA repressor (212 aa).

The segment at residues 29–49 (VREIGEAVGLSSSSTIHGHIE) is a DNA-binding region (H-T-H motif). Active-site for autocatalytic cleavage activity residues include serine 133 and lysine 171.

Belongs to the peptidase S24 family. In terms of assembly, homodimer.

The catalysed reaction is Hydrolysis of Ala-|-Gly bond in repressor LexA.. Represses a number of genes involved in the response to DNA damage (SOS response), including recA and lexA. In the presence of single-stranded DNA, RecA interacts with LexA causing an autocatalytic cleavage which disrupts the DNA-binding part of LexA, leading to derepression of the SOS regulon and eventually DNA repair. This Leuconostoc mesenteroides subsp. mesenteroides (strain ATCC 8293 / DSM 20343 / BCRC 11652 / CCM 1803 / JCM 6124 / NCDO 523 / NBRC 100496 / NCIMB 8023 / NCTC 12954 / NRRL B-1118 / 37Y) protein is LexA repressor.